The sequence spans 260 residues: Ribosomal RNA small subunit methyltransferase A (260 aa).

5 residues coordinate S-adenosyl-L-methionine: leucine 23, glycine 48, glutamate 69, aspartate 94, and asparagine 110.

This sequence belongs to the class I-like SAM-binding methyltransferase superfamily. rRNA adenine N(6)-methyltransferase family. RsmA subfamily.

It is found in the cytoplasm. The enzyme catalyses adenosine(1518)/adenosine(1519) in 16S rRNA + 4 S-adenosyl-L-methionine = N(6)-dimethyladenosine(1518)/N(6)-dimethyladenosine(1519) in 16S rRNA + 4 S-adenosyl-L-homocysteine + 4 H(+). Functionally, specifically dimethylates two adjacent adenosines (A1518 and A1519) in the loop of a conserved hairpin near the 3'-end of 16S rRNA in the 30S particle. May play a critical role in biogenesis of 30S subunits. The polypeptide is Ribosomal RNA small subunit methyltransferase A (Thermotoga petrophila (strain ATCC BAA-488 / DSM 13995 / JCM 10881 / RKU-1)).